A 1549-amino-acid polypeptide reads, in one-letter code: Structural maintenance of chromosomes protein 4 (1549 aa).

The tract at residues 1–78 (MPPKTSAAPP…LFSLQLPSRP (78 aa)) is disordered. Over residues 26–36 (KPQKKTTKPVN) the composition is skewed to basic residues. Residues 37-59 (RHKEGSKDPEEELQRAVNEKFDG) show a composition bias toward basic and acidic residues. 121 to 128 (GPNGSGKS) contributes to the ATP binding site. A coiled-coil region spans residues 326–604 (MKLEQRRRQR…QNSSCSSSNK (279 aa)). 2 stretches are compositionally biased toward basic and acidic residues: residues 396 to 407 (LSDLGTEETRRK) and 420 to 444 (AEAEKEKEVKKRSNLEAAPEKAERK). 2 disordered regions span residues 396–444 (LSDL…AERK) and 460–485 (KTANEEADKNLDEFEKRSEAPKEEQK). In terms of domain architecture, SMC hinge spans 619–734 (KSFHGRLGDL…GDSTQEAQRM (116 aa)). Coiled-coil stretches lie at residues 786-1058 (KAAE…KVNR) and 1144-1182 (EKINEISSRDAEEMQMKLKVCEQQVEALKAKVDISSIKA). Residues 1440-1459 (IQTTRDVTSRPQSKATTSGD) are compositionally biased toward polar residues. Residues 1440-1549 (IQTTRDVTSR…AIVDDDDDME (110 aa)) form a disordered region. Residues 1460–1474 (GTERPASRSASRPES) are compositionally biased toward basic and acidic residues. A compositionally biased stretch (polar residues) spans 1510–1523 (TPPSKRSNSASTPK).

It belongs to the SMC family. SMC4 subfamily. In terms of assembly, component of the condensin I complex, which contains the mix-1/SMC2 and smc-4/SMC4 heterodimer, and three non SMC subunits that probably regulate the complex: dpy-26, capg-1 and dpy-28. Within the complex, interacts with mix-1, dpy-26, capg-1 and dpy-28. Component of the condensin II complex, which contains the mix-1/SMC2 and smc-4/SMC4 heterodimer, and three non SMC subunits, kle-2, capg-2 and hcp-6 that probably regulate the complex. Within the complex, interacts with mix-1, kle-2, capg-2 and hcp-6. Interacts with smcl-1.

The protein resides in the nucleus. It is found in the chromosome. Central component of the condensin I complex, a complex required for conversion of interphase chromatin into mitotic-like condense chromosomes. The condensin I complex introduces positive supercoils into relaxed DNA in the presence of type I topoisomerases. Converts nicked DNA into positive knotted forms in the presence of type II topoisomerases. Also a central component of the condensin II complex, a complex that seems to play a role in prophase chromosome condensation. Both the condensin complex I and II play a role in meiotic and mitotic chromosome segregation. Plays a role in robust cytokinesis upon the presence of chromatin obstructions. This is Structural maintenance of chromosomes protein 4 (smc-4) from Caenorhabditis elegans.